A 309-amino-acid polypeptide reads, in one-letter code: Prepilin leader peptidase/N-methyltransferase (309 aa).

A helical transmembrane segment spans residues 35-55 (MQLAFAIVLGLVVGSFLNVVV). Positions 96, 99, 121, and 124 each coordinate Zn(2+). A run of 6 helical transmembrane segments spans residues 147-167 (LALFGPSGAALAAFGLCAALL), 183-203 (LTLPLLWAGLCVNLWGTFASL), 207-227 (VIGAIAGYLFLWCILWLFKLL), 230-250 (IEGIGYGDLKLLAALGAWLGW), 253-273 (LPQVVLIAAVAGAAVGLVATW), and 288-308 (FLAAGGAATLFFGTPFYLLLG).

The protein belongs to the peptidase A24 family. It depends on Zn(2+) as a cofactor.

It localises to the cell inner membrane. It carries out the reaction Typically cleaves a -Gly-|-Phe- bond to release an N-terminal, basic peptide of 5-8 residues from type IV prepilin, and then N-methylates the new N-terminal amino group, the methyl donor being S-adenosyl-L-methionine.. Functionally, plays an essential role in type IV pili and type II pseudopili formation by proteolytically removing the leader sequence from substrate proteins and subsequently monomethylating the alpha-amino group of the newly exposed N-terminal phenylalanine. This is Prepilin leader peptidase/N-methyltransferase (gspO) from Burkholderia pseudomallei (strain 1026b).